The primary structure comprises 505 residues: Maturase K (505 aa).

This sequence belongs to the intron maturase 2 family. MatK subfamily.

It is found in the plastid. Its subcellular location is the chloroplast. Functionally, usually encoded in the trnK tRNA gene intron. Probably assists in splicing its own and other chloroplast group II introns. The protein is Maturase K of Rhizophora stylosa (Bakau).